Reading from the N-terminus, the 452-residue chain is Tripartite motif-containing protein 49 (452 aa).

Residues 15–56 form an RING-type zinc finger; that stretch reads CPLCMNYFIDPVTIDCGHSFCRPCFYLNWQDIPFLVQCSECT. The B box-type zinc-finger motif lies at 88 to 129; that stretch reads SEEQMCGTHRETKKIFCEVDRSLLCLLCSSSQEHRYHRHRPI. Zn(2+) is bound by residues C93, H96, C115, and H121. Residues 269–452 form the B30.2/SPRY domain; sequence ELSAGPITGL…LRPIFCCIHF (184 aa).

This sequence belongs to the TRIM/RBCC family. Preferentially expressed in testis.

The protein is Tripartite motif-containing protein 49 (TRIM49) of Homo sapiens (Human).